The sequence spans 438 residues: GTPase Obg (438 aa).

The region spanning 2 to 160 (SMFLDQVTID…RKIELELKVL (159 aa)) is the Obg domain. Residues 128–147 (NIRFASPRNPAPEIAENGEP) are disordered. Residues 161 to 339 (ADVGLVGFPS…LLNATADLLE (179 aa)) form the OBG-type G domain. GTP-binding positions include 167–174 (GFPSVGKS), 192–196 (FTTLV), 214–217 (DLPG), 284–287 (NKMD), and 320–322 (SGV). Residues serine 174 and threonine 194 each contribute to the Mg(2+) site. The OCT domain occupies 360–438 (GFQPEGPEFT…IGNFEFEFVE (79 aa)).

The protein belongs to the TRAFAC class OBG-HflX-like GTPase superfamily. OBG GTPase family. In terms of assembly, monomer. It depends on Mg(2+) as a cofactor.

Its subcellular location is the cytoplasm. An essential GTPase which binds GTP, GDP and possibly (p)ppGpp with moderate affinity, with high nucleotide exchange rates and a fairly low GTP hydrolysis rate. Plays a role in control of the cell cycle, stress response, ribosome biogenesis and in those bacteria that undergo differentiation, in morphogenesis control. In Enterococcus faecalis (strain ATCC 700802 / V583), this protein is GTPase Obg.